Reading from the N-terminus, the 139-residue chain is Nucleoside diphosphate kinase (139 aa).

ATP is bound by residues lysine 11, phenylalanine 59, arginine 87, threonine 93, arginine 104, and asparagine 114. The Pros-phosphohistidine intermediate role is filled by histidine 117.

Belongs to the NDK family. As to quaternary structure, homotetramer. Requires Mg(2+) as cofactor.

Its subcellular location is the cytoplasm. The catalysed reaction is a 2'-deoxyribonucleoside 5'-diphosphate + ATP = a 2'-deoxyribonucleoside 5'-triphosphate + ADP. It catalyses the reaction a ribonucleoside 5'-diphosphate + ATP = a ribonucleoside 5'-triphosphate + ADP. Major role in the synthesis of nucleoside triphosphates other than ATP. The ATP gamma phosphate is transferred to the NDP beta phosphate via a ping-pong mechanism, using a phosphorylated active-site intermediate. This Flavobacterium johnsoniae (strain ATCC 17061 / DSM 2064 / JCM 8514 / BCRC 14874 / CCUG 350202 / NBRC 14942 / NCIMB 11054 / UW101) (Cytophaga johnsonae) protein is Nucleoside diphosphate kinase.